Reading from the N-terminus, the 316-residue chain is Annexin D5 (316 aa).

Residue Ala2 is modified to N-acetylalanine. Annexin repeat units follow at residues 11–82, 83–154, 166–238, and 242–313; these read PSPR…LWMP, EAVE…AYLN, ASVE…TILQ, and NSCF…SLLG. The Ca(2+) site is built by Phe24, Gly26, Gly28, and Glu68. Ser95 carries the phosphoserine modification. Thr112 is subject to Phosphothreonine. Gly259 serves as a coordination point for Ca(2+). Tyr284 is modified (phosphotyrosine). Residues Asp299 and Thr300 each coordinate Ca(2+).

It belongs to the annexin (TC 1.A.31.1) family. In terms of tissue distribution, expressed mainly in roots and flowers. Lower in stems and leaves.

The sequence is that of Annexin D5 (ANN5) from Arabidopsis thaliana (Mouse-ear cress).